Consider the following 354-residue polypeptide: 3-dehydroquinate synthase (354 aa).

NAD(+)-binding positions include G100–D104, T124–T125, K136, K145, and F163–T166. Zn(2+) contacts are provided by E178, H242, and H256.

The protein belongs to the sugar phosphate cyclases superfamily. Dehydroquinate synthase family. Co(2+) is required as a cofactor. Requires Zn(2+) as cofactor. It depends on NAD(+) as a cofactor.

Its subcellular location is the cytoplasm. It catalyses the reaction 7-phospho-2-dehydro-3-deoxy-D-arabino-heptonate = 3-dehydroquinate + phosphate. Its pathway is metabolic intermediate biosynthesis; chorismate biosynthesis; chorismate from D-erythrose 4-phosphate and phosphoenolpyruvate: step 2/7. Catalyzes the conversion of 3-deoxy-D-arabino-heptulosonate 7-phosphate (DAHP) to dehydroquinate (DHQ). The protein is 3-dehydroquinate synthase of Staphylococcus aureus (strain NCTC 8325 / PS 47).